The primary structure comprises 451 residues: Serine--tRNA ligase, cytoplasmic (451 aa).

Residue 236–238 participates in L-serine binding; it reads TSE. ATP is bound by residues 267-269 and Val283; that span reads RKE. Glu290 provides a ligand contact to L-serine. 354–357 is an ATP binding site; it reads ELVS. Thr392 contacts L-serine.

The protein belongs to the class-II aminoacyl-tRNA synthetase family. Type-1 seryl-tRNA synthetase subfamily. Homodimer. The tRNA molecule binds across the dimer.

The protein resides in the cytoplasm. The catalysed reaction is tRNA(Ser) + L-serine + ATP = L-seryl-tRNA(Ser) + AMP + diphosphate + H(+). The enzyme catalyses tRNA(Sec) + L-serine + ATP = L-seryl-tRNA(Sec) + AMP + diphosphate + H(+). The protein operates within aminoacyl-tRNA biosynthesis; selenocysteinyl-tRNA(Sec) biosynthesis; L-seryl-tRNA(Sec) from L-serine and tRNA(Sec): step 1/1. Functionally, catalyzes the attachment of serine to tRNA(Ser). Is also able to aminoacylate tRNA(Sec) with serine, to form the misacylated tRNA L-seryl-tRNA(Sec), which will be further converted into selenocysteinyl-tRNA(Sec). This is Serine--tRNA ligase, cytoplasmic (serS) from Dictyostelium discoideum (Social amoeba).